The following is a 403-amino-acid chain: Shaggy-related protein kinase GSK4 (403 aa).

The Protein kinase domain maps to 71-355; sequence YMAERVVGTG…ALEACAHSFF (285 aa). ATP-binding positions include 77–85 and K100; that span reads VGTGSFGVV. D196 (proton acceptor) is an active-site residue.

Belongs to the protein kinase superfamily. CMGC Ser/Thr protein kinase family. GSK-3 subfamily. Interacts with LIC.

The catalysed reaction is L-seryl-[protein] + ATP = O-phospho-L-seryl-[protein] + ADP + H(+). It catalyses the reaction L-threonyl-[protein] + ATP = O-phospho-L-threonyl-[protein] + ADP + H(+). In terms of biological role, probable serine-threonine kinase that may regulate brassinosteroid signaling. This is Shaggy-related protein kinase GSK4 from Oryza sativa subsp. japonica (Rice).